The primary structure comprises 292 residues: Small ribosomal subunit biogenesis GTPase RsgA (292 aa).

A CP-type G domain is found at 64–221; sequence RSELFRPAVA…LVDTPGFSSL (158 aa). Residues 113 to 116 and 164 to 172 each bind GTP; these read NKMD and GPSGVGKST. 4 residues coordinate Zn(2+): C245, C250, H252, and C258.

Belongs to the TRAFAC class YlqF/YawG GTPase family. RsgA subfamily. In terms of assembly, monomer. Associates with 30S ribosomal subunit, binds 16S rRNA. Requires Zn(2+) as cofactor.

The protein localises to the cytoplasm. One of several proteins that assist in the late maturation steps of the functional core of the 30S ribosomal subunit. Helps release RbfA from mature subunits. May play a role in the assembly of ribosomal proteins into the subunit. Circularly permuted GTPase that catalyzes slow GTP hydrolysis, GTPase activity is stimulated by the 30S ribosomal subunit. The sequence is that of Small ribosomal subunit biogenesis GTPase RsgA from Clostridium botulinum (strain Kyoto / Type A2).